A 320-amino-acid polypeptide reads, in one-letter code: MARNKIALIGSGMIGGTLAHLAGLKELGDVVLFDIAEGTPQGKGLDIAESSPVDGFDAKFTGANDYVAIEGADVVIVTAGVPRKPGMSRDDLLGINLKVMEQVGAGIKKYAPEAFVICITNPLDAMVWALQKFSGLPAHKVVGMAGVLDSARFRYFLSEEFNVSVEDVTAFVLGGHGDSMVPLARYSTVAGIPLPDLVKMGWTSQDKLDKIIQRTRDGGAEIVGLLKTGSAFYAPAASAIQVAESYLKDKKRVLPVAAQLSGQYGVKDMYVGVPTVIGANGVERIIEIDLDKDEKAQFDKSVASVAGLCEACIGIAPSLK.

NAD(+)-binding positions include 10–15 and Asp-34; that span reads GSGMIG. Substrate contacts are provided by Arg-83 and Arg-89. NAD(+) contacts are provided by residues Asn-96 and 119–121; that span reads ITN. Substrate is bound by residues Asn-121 and Arg-152. His-176 serves as the catalytic Proton acceptor.

It belongs to the LDH/MDH superfamily. MDH type 3 family.

The enzyme catalyses (S)-malate + NAD(+) = oxaloacetate + NADH + H(+). Catalyzes the reversible oxidation of malate to oxaloacetate. In Brucella suis (strain ATCC 23445 / NCTC 10510), this protein is Malate dehydrogenase.